The sequence spans 320 residues: ADP-L-glycero-D-manno-heptose-6-epimerase (320 aa).

NADP(+) contacts are provided by residues 10–11 (FI), 31–32 (DN), lysine 38, lysine 53, 75–79 (LGACS), and asparagine 92. The active-site Proton acceptor is the tyrosine 139. Position 143 (lysine 143) interacts with NADP(+). Asparagine 168 is a substrate binding site. NADP(+) contacts are provided by valine 169 and lysine 177. Catalysis depends on lysine 177, which acts as the Proton acceptor. Residues glycine 179, histidine 186, 200–203 (FEGS), arginine 213, and tyrosine 277 each bind substrate.

It belongs to the NAD(P)-dependent epimerase/dehydratase family. HldD subfamily. As to quaternary structure, homopentamer. Requires NADP(+) as cofactor.

It carries out the reaction ADP-D-glycero-beta-D-manno-heptose = ADP-L-glycero-beta-D-manno-heptose. The protein operates within nucleotide-sugar biosynthesis; ADP-L-glycero-beta-D-manno-heptose biosynthesis; ADP-L-glycero-beta-D-manno-heptose from D-glycero-beta-D-manno-heptose 7-phosphate: step 4/4. Its function is as follows. Catalyzes the interconversion between ADP-D-glycero-beta-D-manno-heptose and ADP-L-glycero-beta-D-manno-heptose via an epimerization at carbon 6 of the heptose. The protein is ADP-L-glycero-D-manno-heptose-6-epimerase of Alkalilimnicola ehrlichii (strain ATCC BAA-1101 / DSM 17681 / MLHE-1).